A 164-amino-acid polypeptide reads, in one-letter code: MPLLDSFKVNHTKMPAPAVRLAKVMKTPKGDDISVFDLRFCVPNKDIMSEKGTHTLEHLFAGFMRDHLNSDSVEIIDISPMGCRTGFYMSLIGTPDEKSVAKAWEEAMKDVLSVSDQSKIPELNIYQCGTCAMHSLDEAKQIAQKVLNLGISIMNNKELKLENA.

Residues H54, H58, and C128 each coordinate Fe cation.

Belongs to the LuxS family. In terms of assembly, homodimer. The cofactor is Fe cation.

The enzyme catalyses S-(5-deoxy-D-ribos-5-yl)-L-homocysteine = (S)-4,5-dihydroxypentane-2,3-dione + L-homocysteine. Involved in the synthesis of autoinducer 2 (AI-2) which is secreted by bacteria and is used to communicate both the cell density and the metabolic potential of the environment. The regulation of gene expression in response to changes in cell density is called quorum sensing. Catalyzes the transformation of S-ribosylhomocysteine (RHC) to homocysteine (HC) and 4,5-dihydroxy-2,3-pentadione (DPD). This is S-ribosylhomocysteine lyase from Campylobacter jejuni subsp. jejuni serotype O:23/36 (strain 81-176).